Consider the following 212-residue polypeptide: Large ribosomal subunit protein uL4 (212 aa).

Belongs to the universal ribosomal protein uL4 family. Part of the 50S ribosomal subunit.

Its function is as follows. One of the primary rRNA binding proteins, this protein initially binds near the 5'-end of the 23S rRNA. It is important during the early stages of 50S assembly. It makes multiple contacts with different domains of the 23S rRNA in the assembled 50S subunit and ribosome. In terms of biological role, forms part of the polypeptide exit tunnel. In Caulobacter sp. (strain K31), this protein is Large ribosomal subunit protein uL4.